Here is a 530-residue protein sequence, read N- to C-terminus: MKFVEIRDLQVTYMGKTKPSIVIDKLDIEEGESVLITGRSGSGKSTLVSVINGVIPHLINAEVKGEVRVFGLDIKTTPTSEISRYVGTLLQDPDTQAFNYTVIDEVAFGVENYMVSREEMINRVEESMKICGISHLRDREINTLSGGELQRTVLASVLAMRPKALILDEPTSNIDPQGTREILELVKTFRSEGISLVLVEHKIERVLPFIDRIIVVESGKIAVDIKKDEIIDRADLLHSLGLEIPDYMLFLKKSGFRRIDYEYLRKTYNYKPPSRNEGKGEILFASVKVKTKSGKYLINTKISLKQGTITALMGKNGSGKTTLLKAIVGLIDKKRLIVEEEKVIVNGKDLSKAKLVERGKYLAYLPQFFDVMFIKRTVEDEVKFSMKNRGVYDEMRLGEILRIFSLDAYRTEDPLVLSMGQRRRVAMASVIAGGAKVILMDEPTSGQDWYHRQILGKELLELRNKGYTILVVTHDARFVDRFTDYLLVMSDGKIVLEGKPEEVFSKSLNHGIEPPLEYELGGLIKNEQFS.

ABC transporter domains are found at residues isoleucine 6 to glutamate 243 and isoleucine 282 to leucine 516. ATP contacts are provided by residues glycine 38–serine 45 and glycine 314–threonine 321.

The protein belongs to the ABC transporter superfamily.

It is found in the cell membrane. Its function is as follows. Probably part of an ABC transporter complex. Responsible for energy coupling to the transport system. The chain is Putative ABC transporter ATP-binding protein SSO1893 from Saccharolobus solfataricus (strain ATCC 35092 / DSM 1617 / JCM 11322 / P2) (Sulfolobus solfataricus).